The following is a 358-amino-acid chain: Src kinase-associated phosphoprotein 2 (358 aa).

Phosphoserine occurs at positions 5 and 6. The tract at residues 62–88 (ESQDKGDAEDGEEYDDPFAGPPDTISL) is disordered. Y75 bears the Phosphotyrosine mark. A phosphoserine mark is found at S87 and S90. Positions 116–219 (FVLKAGYLEK…WVQQLNFVLQ (104 aa)) constitute a PH domain. Y151 and Y197 each carry phosphotyrosine. At S223 the chain carries Phosphoserine. A disordered region spans residues 232 to 254 (ERGELYDDVDHPLPSSSPTRSLP). Low complexity predominate over residues 243 to 253 (PLPSSSPTRSL). Y260 carries the post-translational modification Phosphotyrosine. Phosphoserine is present on residues S282 and S285. One can recognise an SH3 domain in the interval 296 to 357 (NYANFYQGLW…PKAYVMEMYD (62 aa)).

It belongs to the SKAP family. Interacts with FYB1, which is required for SKAP2 protein stability. Interacts with PTPNS1. Part of a complex consisting of SKAP2, FYB1 and PTPNS1. Part of a complex consisting of SKAP2, FYB1 and LILRB3. Interacts with LAT, GRB2, PTK2B and PRAM1. May interact with actin. May interact with FYN, HCK and LYN. Interacts with FASLG.

The protein resides in the cytoplasm. Its function is as follows. May be involved in B-cell and macrophage adhesion processes. In B-cells, may act by coupling the B-cell receptor (BCR) to integrin activation. May play a role in src signaling pathway. This Bos taurus (Bovine) protein is Src kinase-associated phosphoprotein 2 (SKAP2).